The chain runs to 372 residues: F-box protein AFR (372 aa).

Residues 1 to 15 (MAEQETTSNINTIND) are compositionally biased toward polar residues. The interval 1-27 (MAEQETTSNINTINDQAEEETRTKSQP) is disordered. Residues 29 to 74 (ISGLPNDIAELCLLRLPYPYHALYRSVSSSWNKTITNPRFLFSKQS) enclose the F-box domain. Kelch repeat units lie at residues 80-126 (PYLF…HALS), 135-178 (KLFV…NVNG), 179-227 (KIMA…VIGK), 229-276 (MCVT…IRDR), and 279-325 (VISE…DRVF).

As to quaternary structure, part of a SCF (ASK-cullin-F-box) protein ligase complex. Interacts with SKP1A.

It participates in protein modification; protein ubiquitination. Its function is as follows. Component of SCF (ASK-cullin-F-box) E3 ubiquitin ligase complexes, which may mediate the ubiquitination and subsequent proteasomal degradation of target proteins. Part of the phyA-mediated signaling transduction pathway leading to the regulation of gene expression and hypocotyls elongation in response to red and far-red light exposure. The chain is F-box protein AFR (AFR) from Arabidopsis thaliana (Mouse-ear cress).